Here is a 441-residue protein sequence, read N- to C-terminus: UDP-N-acetylglucosamine 1-carboxyvinyltransferase 1 (441 aa).

A phosphoenolpyruvate-binding site is contributed by 42-43 (KN). R117 is a UDP-N-acetyl-alpha-D-glucosamine binding site. C141 serves as the catalytic Proton donor. C141 bears the 2-(S-cysteinyl)pyruvic acid O-phosphothioketal mark. UDP-N-acetyl-alpha-D-glucosamine-binding residues include D330 and I352.

The protein belongs to the EPSP synthase family. MurA subfamily.

It localises to the cytoplasm. It carries out the reaction phosphoenolpyruvate + UDP-N-acetyl-alpha-D-glucosamine = UDP-N-acetyl-3-O-(1-carboxyvinyl)-alpha-D-glucosamine + phosphate. Its pathway is cell wall biogenesis; peptidoglycan biosynthesis. In terms of biological role, cell wall formation. Adds enolpyruvyl to UDP-N-acetylglucosamine. The polypeptide is UDP-N-acetylglucosamine 1-carboxyvinyltransferase 1 (Symbiobacterium thermophilum (strain DSM 24528 / JCM 14929 / IAM 14863 / T)).